Reading from the N-terminus, the 238-residue chain is Chloride intracellular channel exl-1 (238 aa).

The protein belongs to the chloride channel CLIC family. Expressed in the intestine, neurons and muscles.

It localises to the cytoplasm. Its subcellular location is the membrane. It is found in the lysosome membrane. The protein localises to the golgi apparatus membrane. Functionally, probable chloride channel. This chain is Chloride intracellular channel exl-1 (exl-1), found in Caenorhabditis elegans.